We begin with the raw amino-acid sequence, 91 residues long: Small ribosomal subunit protein uS19 (91 aa).

The protein belongs to the universal ribosomal protein uS19 family.

Protein S19 forms a complex with S13 that binds strongly to the 16S ribosomal RNA. The protein is Small ribosomal subunit protein uS19 of Metamycoplasma arthritidis (strain 158L3-1) (Mycoplasma arthritidis).